The primary structure comprises 270 residues: Sulfur carrier protein FdhD (270 aa).

2 stretches are compositionally biased toward basic and acidic residues: residues 1–10 and 20–30; these read MSMQDHDRTE and RHLDGSSRPDW. Residues 1-30 are disordered; it reads MSMQDHDRTEQGMTSLAVTRHLDGSSRPDW. The active-site Cysteine persulfide intermediate is cysteine 117.

The protein belongs to the FdhD family.

The protein resides in the cytoplasm. Required for formate dehydrogenase (FDH) activity. Acts as a sulfur carrier protein that transfers sulfur from IscS to the molybdenum cofactor prior to its insertion into FDH. This is Sulfur carrier protein FdhD from Chromobacterium violaceum (strain ATCC 12472 / DSM 30191 / JCM 1249 / CCUG 213 / NBRC 12614 / NCIMB 9131 / NCTC 9757 / MK).